The primary structure comprises 335 residues: Beta-ketoacyl-[acyl-carrier-protein] synthase III (335 aa).

Catalysis depends on residues Cys-119 and His-261. Residues 262-266 (QANQR) are ACP-binding. Asn-291 is an active-site residue.

The protein belongs to the thiolase-like superfamily. FabH family. As to quaternary structure, homodimer.

The protein localises to the cytoplasm. The enzyme catalyses malonyl-[ACP] + acetyl-CoA + H(+) = 3-oxobutanoyl-[ACP] + CO2 + CoA. It participates in lipid metabolism; fatty acid biosynthesis. Catalyzes the condensation reaction of fatty acid synthesis by the addition to an acyl acceptor of two carbons from malonyl-ACP. Catalyzes the first condensation reaction which initiates fatty acid synthesis and may therefore play a role in governing the total rate of fatty acid production. Possesses both acetoacetyl-ACP synthase and acetyl transacylase activities. Its substrate specificity determines the biosynthesis of branched-chain and/or straight-chain of fatty acids. This chain is Beta-ketoacyl-[acyl-carrier-protein] synthase III, found in Prochlorococcus marinus (strain MIT 9312).